The primary structure comprises 65 residues: MSEIIEVIYEDGVLKPLKPLKIKGKKRLKIKIVNDDVEEFLKSMIIKKCKDIDYKKLKEAYYESF.

The protein belongs to the UPF0165 family.

Possibly the antitoxin component of a type II toxin-antitoxin (TA) system. The sequence is that of Putative antitoxin MJECL31 from Methanocaldococcus jannaschii (strain ATCC 43067 / DSM 2661 / JAL-1 / JCM 10045 / NBRC 100440) (Methanococcus jannaschii).